The following is a 121-amino-acid chain: Large ribosomal subunit protein bL12 (121 aa).

It belongs to the bacterial ribosomal protein bL12 family. In terms of assembly, homodimer. Part of the ribosomal stalk of the 50S ribosomal subunit. Forms a multimeric L10(L12)X complex, where L10 forms an elongated spine to which 2 to 4 L12 dimers bind in a sequential fashion. Binds GTP-bound translation factors.

Functionally, forms part of the ribosomal stalk which helps the ribosome interact with GTP-bound translation factors. Is thus essential for accurate translation. The chain is Large ribosomal subunit protein bL12 from Vibrio atlanticus (strain LGP32) (Vibrio splendidus (strain Mel32)).